The primary structure comprises 150 residues: Cytochrome c oxidase subunit 5A, mitochondrial (150 aa).

Residues 1 to 41 constitute a mitochondrion transit peptide; it reads MLGAALRRCAVAATTWAGPRGHLHSARTPGPAAAIQSVRCY. An SIFI-degron motif is present at residues 2 to 17; the sequence is LGAALRRCAVAATTWA. Residues K87 and K113 each carry the N6-acetyllysine modification. T141 carries the phosphothreonine modification.

The protein belongs to the cytochrome c oxidase subunit 5A family. In terms of assembly, component of the cytochrome c oxidase (complex IV, CIV), a multisubunit enzyme composed of 14 subunits. The complex is composed of a catalytic core of 3 subunits MT-CO1, MT-CO2 and MT-CO3, encoded in the mitochondrial DNA, and 11 supernumerary subunits COX4I, COX5A, COX5B, COX6A, COX6B, COX6C, COX7A, COX7B, COX7C, COX8 and NDUFA4, which are encoded in the nuclear genome. The complex exists as a monomer or a dimer and forms supercomplexes (SCs) in the inner mitochondrial membrane with NADH-ubiquinone oxidoreductase (complex I, CI) and ubiquinol-cytochrome c oxidoreductase (cytochrome b-c1 complex, complex III, CIII), resulting in different assemblies (supercomplex SCI(1)III(2)IV(1) and megacomplex MCI(2)III(2)IV(2)). Interacts with AFG1L. Interacts with RAB5IF. In response to mitochondrial stress, the precursor protein is ubiquitinated by the SIFI complex in the cytoplasm before mitochondrial import, leading to its degradation. Within the SIFI complex, UBR4 initiates ubiquitin chain that are further elongated or branched by KCMF1.

The protein resides in the mitochondrion inner membrane. It participates in energy metabolism; oxidative phosphorylation. Functionally, component of the cytochrome c oxidase, the last enzyme in the mitochondrial electron transport chain which drives oxidative phosphorylation. The respiratory chain contains 3 multisubunit complexes succinate dehydrogenase (complex II, CII), ubiquinol-cytochrome c oxidoreductase (cytochrome b-c1 complex, complex III, CIII) and cytochrome c oxidase (complex IV, CIV), that cooperate to transfer electrons derived from NADH and succinate to molecular oxygen, creating an electrochemical gradient over the inner membrane that drives transmembrane transport and the ATP synthase. Cytochrome c oxidase is the component of the respiratory chain that catalyzes the reduction of oxygen to water. Electrons originating from reduced cytochrome c in the intermembrane space (IMS) are transferred via the dinuclear copper A center (CU(A)) of subunit 2 and heme A of subunit 1 to the active site in subunit 1, a binuclear center (BNC) formed by heme A3 and copper B (CU(B)). The BNC reduces molecular oxygen to 2 water molecules using 4 electrons from cytochrome c in the IMS and 4 protons from the mitochondrial matrix. In Symphalangus syndactylus (Siamang), this protein is Cytochrome c oxidase subunit 5A, mitochondrial (COX5A).